Consider the following 366-residue polypeptide: Lysophosphatidic acid receptor 1-A (366 aa).

Topologically, residues 1-52 (MASLSEFVSEPISMMSQTSAASESQCYYNETIAFFYNRSGKYLATEWNAVSK) are extracellular. Intrachain disulfides connect C26–C192 and C190–C197. N-linked (GlcNAc...) asparagine glycosylation is found at N29 and N37. K41 lines the a 1-acyl-sn-glycero-3-phosphate pocket. Residues 53–77 (LVMGLGITVCIFIMLANLLVMVAIY) traverse the membrane as a helical segment. The Cytoplasmic portion of the chain corresponds to 78–85 (VNRRFHFP). Residues 86–109 (IYYLMANLAAADFFAGLAYFYLMF) traverse the membrane as a helical segment. Residues 110 to 123 (NTGPNTRRLTVSTW) are Extracellular-facing. A helical membrane pass occupies residues 124–146 (LLRQGLIDTSLTASVANLLAIAI). Position 126 to 131 (126 to 131 (RQGLID)) interacts with a 1-acyl-sn-glycero-3-phosphate. At 147-165 (ERHITVFRMQLHTRMSNRR) the chain is on the cytoplasmic side. The helical transmembrane segment at 166–186 (VVVVIVVIWTVAIVMGAIPSV) threads the bilayer. The Extracellular portion of the chain corresponds to 187–206 (GWNCICDLEQCSNMAPLYSD). The helical transmembrane segment at 207–227 (SYLIFWTIFNLVTFVVMVVLY) threads the bilayer. W212 contacts a 1-acyl-sn-glycero-3-phosphate. Over 228-257 (AHIFVYVRQKTMRMSRHSSGPRRNRDTMMS) the chain is Cytoplasmic. The helical transmembrane segment at 258–282 (LLKTVVIVLGAFIVCWTPGLVLLLL) threads the bilayer. Over 283 to 296 (DICCPQCNILAYEK) the chain is Extracellular. C286 and C289 are joined by a disulfide. The chain crosses the membrane as a helical span at residues 297 to 317 (FFLLLAEFNSAMNPIIYSYRD). Residues 318-366 (KEMSATFKQILCCQRTENVNGPTEGSDRSASSLNHTILAGVHSNDHSVV) lie on the Cytoplasmic side of the membrane.

It belongs to the G-protein coupled receptor 1 family. As to expression, expressed at high levels in oocytes and at lower levels in brain and spinal cord. Below detection level in lung, heart, kidney, liver, muscle, stomach, and intestine.

The protein localises to the cell surface. It is found in the cell membrane. It localises to the endosome. Receptor for lysophosphatidic acid (LPA). Plays a role in the reorganization of the actin cytoskeleton, cell migration, differentiation and proliferation, and thereby contributes to the responses to tissue damage and infectious agents. Activates downstream signaling cascades via the G(i)/G(o), G(12)/G(13), and G(q) families of heteromeric G proteins. Signaling inhibits adenylyl cyclase activity and decreases cellular cAMP levels. Signaling triggers an increase of cytoplasmic Ca(2+) levels. Signaling leads to the activation of phospholipase C (PLC) and the formation of inositol 1,4,5-trisphosphate. Signaling mediates activation of down-stream MAP kinases. Contributes to the regulation of cell shape. Promotes Rho-dependent reorganization of the actin cytoskeleton in neuronal cells and neurite retraction. Promotes the activation of Rho and the formation of actin stress fibers. Promotes formation of lamellipodia at the leading edge of migrating cells via activation of Rac. Through its function as lysophosphatidic acid receptor, plays a role in chemotaxis and cell migration, including responses to injury and wounding. Promotes cell proliferation in response to lysophosphatidic acid. In Xenopus laevis (African clawed frog), this protein is Lysophosphatidic acid receptor 1-A (lpar1-a).